Consider the following 255-residue polypeptide: Protein YIPF7 (255 aa).

Topologically, residues 1 to 124 (MSNLGQFDSD…ADGSIMNETD (124 aa)) are cytoplasmic. Residues 125–145 (LTGPILFCMALGATLLLAGKV) form a helical membrane-spanning segment. Position 146 (Gln-146) is a topological domain, lumenal. A helical transmembrane segment spans residues 147–167 (FGYVYGMSAIGCLGIHALLNL). Over 168 to 180 (MSSSGVSYGCVAS) the chain is Cytoplasmic. Residues 181-201 (VLGYCLLPMVILSSCAIFFSL) form a helical membrane-spanning segment. The Lumenal portion of the chain corresponds to 202–204 (QGT). The chain crosses the membrane as a helical span at residues 205–225 (FGTVSALVIIGWCSLSASKIF). Over 226–234 (TSALAMEGQ) the chain is Cytoplasmic. A helical membrane pass occupies residues 235–255 (QLLIAYPCALLYGLFALVTVF).

This sequence belongs to the YIP1 family.

The protein resides in the endoplasmic reticulum membrane. It localises to the golgi apparatus. The protein localises to the cis-Golgi network membrane. It is found in the trans-Golgi network membrane. This Bos taurus (Bovine) protein is Protein YIPF7 (YIPF7).